The following is a 380-amino-acid chain: Crotonobetainyl-CoA reductase (380 aa).

This sequence belongs to the acyl-CoA dehydrogenase family. Homotetramer. It depends on FAD as a cofactor.

The protein localises to the cytoplasm. The enzyme catalyses 4-(trimethylamino)butanoyl-CoA + oxidized [electron-transfer flavoprotein] + H(+) = crotonobetainyl-CoA + reduced [electron-transfer flavoprotein]. The protein operates within amine and polyamine metabolism; carnitine metabolism. In terms of biological role, catalyzes the reduction of crotonobetainyl-CoA to gamma-butyrobetainyl-CoA. This chain is Crotonobetainyl-CoA reductase, found in Escherichia coli O6:K15:H31 (strain 536 / UPEC).